A 185-amino-acid chain; its full sequence is Elongation factor P (185 aa).

The protein belongs to the elongation factor P family.

It is found in the cytoplasm. It functions in the pathway protein biosynthesis; polypeptide chain elongation. Involved in peptide bond synthesis. Stimulates efficient translation and peptide-bond synthesis on native or reconstituted 70S ribosomes in vitro. Probably functions indirectly by altering the affinity of the ribosome for aminoacyl-tRNA, thus increasing their reactivity as acceptors for peptidyl transferase. This chain is Elongation factor P, found in Alkaliphilus oremlandii (strain OhILAs) (Clostridium oremlandii (strain OhILAs)).